A 1408-amino-acid polypeptide reads, in one-letter code: DNA-directed RNA polymerase subunit beta' (1408 aa).

Zn(2+)-binding residues include Cys-70, Cys-72, Cys-85, and Cys-88. Asp-460, Asp-462, and Asp-464 together coordinate Mg(2+). 4 residues coordinate Zn(2+): Cys-814, Cys-888, Cys-895, and Cys-898.

It belongs to the RNA polymerase beta' chain family. The RNAP catalytic core consists of 2 alpha, 1 beta, 1 beta' and 1 omega subunit. When a sigma factor is associated with the core the holoenzyme is formed, which can initiate transcription. It depends on Mg(2+) as a cofactor. Zn(2+) serves as cofactor.

The enzyme catalyses RNA(n) + a ribonucleoside 5'-triphosphate = RNA(n+1) + diphosphate. Its function is as follows. DNA-dependent RNA polymerase catalyzes the transcription of DNA into RNA using the four ribonucleoside triphosphates as substrates. This chain is DNA-directed RNA polymerase subunit beta', found in Baumannia cicadellinicola subsp. Homalodisca coagulata.